We begin with the raw amino-acid sequence, 96 residues long: Putative toxin Y4kP (96 aa).

It belongs to the RelE toxin family.

Toxic component of a type II toxin-antitoxin (TA) system. This chain is Putative toxin Y4kP, found in Sinorhizobium fredii (strain NBRC 101917 / NGR234).